Reading from the N-terminus, the 281-residue chain is Foldase protein PrsA (281 aa).

The N-terminal stretch at 1-18 (MKKWMMAAAVVSLMALSA) is a signal peptide. C19 carries the N-palmitoyl cysteine lipid modification. C19 carries S-diacylglycerol cysteine lipidation. The PpiC domain maps to 133–223 (KPKIRASHIL…YGYHIIKVTD (91 aa)).

This sequence belongs to the PrsA family.

The protein resides in the cell membrane. It carries out the reaction [protein]-peptidylproline (omega=180) = [protein]-peptidylproline (omega=0). Plays a major role in protein secretion by helping the post-translocational extracellular folding of several secreted proteins. This is Foldase protein PrsA from Geobacillus kaustophilus (strain HTA426).